The following is a 2213-amino-acid chain: Protein sidekick-1 (2213 aa).

Residues Met-1–Ala-73 are disordered. A compositionally biased stretch (low complexity) spans Ala-23–Pro-38. Ig-like C2-type domains are found at residues Pro-104–Gln-186, Gly-191–Ile-277, Pro-293–Ala-378, Pro-386–Thr-476, and Pro-480–Thr-569. Cys-126 and Cys-169 are oxidised to a cystine. 2 N-linked (GlcNAc...) asparagine glycosylation sites follow: Asn-271 and Asn-301. 3 cysteine pairs are disulfide-bonded: Cys-315-Cys-362, Cys-408-Cys-458, and Cys-501-Cys-553. N-linked (GlcNAc...) asparagine glycosylation is found at Asn-550, Asn-563, and Asn-572. Residues Thr-574 to Glu-663 form the Ig-like C2-type 6 domain. Cys-595 and Cys-647 are disulfide-bonded. N-linked (GlcNAc...) asparagine glycosylation is found at Asn-655, Asn-679, Asn-782, Asn-821, Asn-882, Asn-1015, and Asn-1024. 13 consecutive Fibronectin type-III domains span residues Ser-670–Glu-766, Pro-771–Gly-867, Pro-872–Asp-970, Ala-974–Asp-1068, Ala-1072–Ala-1171, Ala-1176–Ser-1274, Ala-1279–Asp-1376, Pro-1380–Arg-1474, Pro-1479–Asp-1576, Pro-1581–Ala-1699, Ala-1704–Ala-1800, Ala-1804–Ala-1899, and Ser-1902–Val-2000. Asn-1282 and Asn-1333 each carry an N-linked (GlcNAc...) asparagine glycan. 5 N-linked (GlcNAc...) asparagine glycosylation sites follow: Asn-1654, Asn-1748, Asn-1767, Asn-1819, and Asn-1893. A helical transmembrane segment spans residues Phe-2010–Val-2030. Topologically, residues Leu-2031–Val-2213 are cytoplasmic. A disordered region spans residues Ser-2075 to Asp-2098. The short motif at Thr-2207–Val-2213 is the PDZ-binding element.

The protein belongs to the sidekick family. In terms of assembly, homodimer; mediates homophilic interactions to promote cell adhesion. As to expression, up-regulated in glomeruli in HIV-associated nephropathy. In diseased glomeruli, significantly overexpressed and the expression is no longer restricted to mesangial cells but includes podocytes and parietal epithelial cells.

It is found in the cell membrane. Its subcellular location is the synapse. Functionally, adhesion molecule that promotes lamina-specific synaptic connections in the retina. Expressed in specific subsets of interneurons and retinal ganglion cells (RGCs) and promotes synaptic connectivity via homophilic interactions. This chain is Protein sidekick-1, found in Homo sapiens (Human).